Here is a 175-residue protein sequence, read N- to C-terminus: ATP synthase subunit b (175 aa).

A helical transmembrane segment spans residues 14–34 (LNPNPGLIFWTALTFLIVLVI).

The protein belongs to the ATPase B chain family. In terms of assembly, F-type ATPases have 2 components, F(1) - the catalytic core - and F(0) - the membrane proton channel. F(1) has five subunits: alpha(3), beta(3), gamma(1), delta(1), epsilon(1). F(0) has four main subunits: a(1), b(2) and c(10-14). The alpha and beta chains form an alternating ring which encloses part of the gamma chain. F(1) is attached to F(0) by a central stalk formed by the gamma and epsilon chains, while a peripheral stalk is formed by the delta and b chains.

The protein localises to the cell inner membrane. F(1)F(0) ATP synthase produces ATP from ADP in the presence of a proton or sodium gradient. F-type ATPases consist of two structural domains, F(1) containing the extramembraneous catalytic core and F(0) containing the membrane proton channel, linked together by a central stalk and a peripheral stalk. During catalysis, ATP synthesis in the catalytic domain of F(1) is coupled via a rotary mechanism of the central stalk subunits to proton translocation. In terms of biological role, component of the F(0) channel, it forms part of the peripheral stalk, linking F(1) to F(0). The protein is ATP synthase subunit b of Chlorobaculum tepidum (strain ATCC 49652 / DSM 12025 / NBRC 103806 / TLS) (Chlorobium tepidum).